The sequence spans 609 residues: Proteasome-associated ATPase (609 aa).

Residues Met1–Ala24 are disordered. A coiled-coil region spans residues Ser19–Gln96. Gly296–Leu301 is an ATP binding site. Positions Tyr608 to Leu609 are docks into pockets in the proteasome alpha-ring.

It belongs to the AAA ATPase family. As to quaternary structure, homohexamer. Assembles into a hexameric ring structure that caps the 20S proteasome core. Strongly interacts with the prokaryotic ubiquitin-like protein Pup through a hydrophobic interface; the interacting region of ARC lies in its N-terminal coiled-coil domain. There is one Pup binding site per ARC hexamer ring. Upon ATP-binding, the C-terminus of ARC interacts with the alpha-rings of the proteasome core, possibly by binding to the intersubunit pockets.

It functions in the pathway protein degradation; proteasomal Pup-dependent pathway. ATPase which is responsible for recognizing, binding, unfolding and translocation of pupylated proteins into the bacterial 20S proteasome core particle. May be essential for opening the gate of the 20S proteasome via an interaction with its C-terminus, thereby allowing substrate entry and access to the site of proteolysis. Thus, the C-termini of the proteasomal ATPase may function like a 'key in a lock' to induce gate opening and therefore regulate proteolysis. This Mycobacterium ulcerans (strain Agy99) protein is Proteasome-associated ATPase.